We begin with the raw amino-acid sequence, 329 residues long: Meiotic drive suppressor wtf21 (329 aa).

The segment at 1 to 68 is disordered; sequence MKNNYTSLKS…RENNPSRSTD (68 aa). A compositionally biased stretch (basic and acidic residues) spans 19 to 30; sequence KTDHEIDLEKGP. The next 5 helical transmembrane spans lie at 73-95, 110-132, 165-182, 192-214, and 290-312; these read FLIKLLISFTPIYVLNVLAICYL, WTLFGFWCLVCTLALIFLTYFYE, IIIWILWLIICCILFVYI, ALICSTCTISAVLLLIVSSVCIP, and GIAFILGGIGNAMMGLANAIRGA.

It belongs to the WTF family. As to quaternary structure, homomer. Interacts with other proteins that exhibit high sequence similarity.

It localises to the spore membrane. The protein resides in the vacuole membrane. Its function is as follows. Acts as a suppressor component of the dual wtf meiotic drive system, and can suppress but not confer meiotic drive by compatible poisons. Wtf meiotic drive systems promote unequal transmission of alleles from the parental zygote to progeny spores by encoding a poison and an antidote from the same locus; the poison is trans-acting and forms toxic aggregates in all spores within an ascus, wherease the antidote is spore-specific and targets aggregates for degradation by the vacuole. Meiotic drive by wtf systems therefore lead to poisoning of all progeny that do not inherit the dual poison/antidote allele, or express a compatible antidote. This Schizosaccharomyces pombe (strain 972 / ATCC 24843) (Fission yeast) protein is Meiotic drive suppressor wtf21.